We begin with the raw amino-acid sequence, 35 residues long: Anti-H(O) lectin 3 (35 aa).

This sequence belongs to the leguminous lectin family. In terms of assembly, homodimer. Post-translationally, highly glycosylated.

Functionally, binds lactose or galactose. In Ulex europaeus (Furze), this protein is Anti-H(O) lectin 3.